A 732-amino-acid chain; its full sequence is Ionotropic receptor 40a (732 aa).

Residues 1–19 (MHKFLALGLLPYLLGLLNS) form the signal peptide. N-linked (GlcNAc...) asparagine glycosylation is found at Asn18, Asn235, and Asn299. The Extracellular portion of the chain corresponds to 20–369 (TRLTFIGNDE…RPFKQDIWPH (350 aa)). A helical membrane pass occupies residues 370–390 (LILTIIFSGPIFYGIIALPYI). At 391 to 465 (WRRRWANSDV…NELHNGYRAK (75 aa)) the chain is on the cytoplasmic side. A helical transmembrane segment spans residues 466-486 (FLTIVYWIAATYVLADVYSAQ). The Extracellular segment spans residues 487 to 688 (LTSQFARPAR…LNLRMLQGAF (202 aa)). A glycan (N-linked (GlcNAc...) asparagine) is linked at Asn531. A helical membrane pass occupies residues 689–709 (IALGVGSLAAGVILLLEIVFI). Residues 710–732 (KLDQARLWMLCSRLQWIRYDRKV) lie on the Cytoplasmic side of the membrane.

The protein belongs to the glutamate-gated ion channel (TC 1.A.10.1) family. In terms of tissue distribution, in the antenna, detected in sacculus neurons which innervate the first and second chambers (at protein level).

The protein resides in the cell membrane. Integral part of a neural sensory system in the antenna that provides the neural basis for the response to environmental changes in humidity (hygrosensation). Together with Ir25a and Ir93a, mediates the response of the hygrosensory sacculus neurons to changes in relative humidity and is required for dry detection behavior. This Drosophila melanogaster (Fruit fly) protein is Ionotropic receptor 40a.